Here is a 229-residue protein sequence, read N- to C-terminus: Large ribosomal subunit protein uL1 (229 aa).

It belongs to the universal ribosomal protein uL1 family. Part of the 50S ribosomal subunit.

Binds directly to 23S rRNA. The L1 stalk is quite mobile in the ribosome, and is involved in E site tRNA release. Functionally, protein L1 is also a translational repressor protein, it controls the translation of the L11 operon by binding to its mRNA. This Phytoplasma australiense protein is Large ribosomal subunit protein uL1.